Here is a 197-residue protein sequence, read N- to C-terminus: Putative ankyrin repeat protein R875 (197 aa).

ANK repeat units lie at residues 78 to 106 (LNKC…DIRE), 107 to 136 (NDDC…DIRA), 138 to 166 (DDDA…NFRK), and 168 to 196 (NDYE…VLHE).

The polypeptide is Putative ankyrin repeat protein R875 (Acanthamoeba polyphaga mimivirus (APMV)).